The chain runs to 305 residues: UDP-3-O-acyl-N-acetylglucosamine deacetylase (305 aa).

Residues histidine 78, histidine 237, and aspartate 241 each contribute to the Zn(2+) site. The active-site Proton donor is histidine 264.

This sequence belongs to the LpxC family. Zn(2+) serves as cofactor.

The catalysed reaction is a UDP-3-O-[(3R)-3-hydroxyacyl]-N-acetyl-alpha-D-glucosamine + H2O = a UDP-3-O-[(3R)-3-hydroxyacyl]-alpha-D-glucosamine + acetate. It participates in glycolipid biosynthesis; lipid IV(A) biosynthesis; lipid IV(A) from (3R)-3-hydroxytetradecanoyl-[acyl-carrier-protein] and UDP-N-acetyl-alpha-D-glucosamine: step 2/6. Catalyzes the hydrolysis of UDP-3-O-myristoyl-N-acetylglucosamine to form UDP-3-O-myristoylglucosamine and acetate, the committed step in lipid A biosynthesis. The sequence is that of UDP-3-O-acyl-N-acetylglucosamine deacetylase from Cupriavidus taiwanensis (strain DSM 17343 / BCRC 17206 / CCUG 44338 / CIP 107171 / LMG 19424 / R1) (Ralstonia taiwanensis (strain LMG 19424)).